Reading from the N-terminus, the 141-residue chain is SsrA-binding protein (141 aa).

The protein belongs to the SmpB family.

It is found in the cytoplasm. Required for rescue of stalled ribosomes mediated by trans-translation. Binds to transfer-messenger RNA (tmRNA), required for stable association of tmRNA with ribosomes. tmRNA and SmpB together mimic tRNA shape, replacing the anticodon stem-loop with SmpB. tmRNA is encoded by the ssrA gene; the 2 termini fold to resemble tRNA(Ala) and it encodes a 'tag peptide', a short internal open reading frame. During trans-translation Ala-aminoacylated tmRNA acts like a tRNA, entering the A-site of stalled ribosomes, displacing the stalled mRNA. The ribosome then switches to translate the ORF on the tmRNA; the nascent peptide is terminated with the 'tag peptide' encoded by the tmRNA and targeted for degradation. The ribosome is freed to recommence translation, which seems to be the essential function of trans-translation. The protein is SsrA-binding protein of Ureaplasma parvum serovar 3 (strain ATCC 27815 / 27 / NCTC 11736).